Reading from the N-terminus, the 439-residue chain is Tol-Pal system protein TolB (439 aa).

An N-terminal signal peptide occupies residues 1–22; the sequence is MTKFPRWLAMLVGLLFPLSALT.

It belongs to the TolB family. The Tol-Pal system is composed of five core proteins: the inner membrane proteins TolA, TolQ and TolR, the periplasmic protein TolB and the outer membrane protein Pal. They form a network linking the inner and outer membranes and the peptidoglycan layer.

The protein resides in the periplasm. Its function is as follows. Part of the Tol-Pal system, which plays a role in outer membrane invagination during cell division and is important for maintaining outer membrane integrity. The protein is Tol-Pal system protein TolB of Xylella fastidiosa (strain Temecula1 / ATCC 700964).